The following is a 256-amino-acid chain: Ubiquinone/menaquinone biosynthesis C-methyltransferase UbiE (256 aa).

S-adenosyl-L-methionine-binding positions include Thr-79, Asp-100, and 128–129 (DA).

This sequence belongs to the class I-like SAM-binding methyltransferase superfamily. MenG/UbiE family.

The enzyme catalyses a 2-demethylmenaquinol + S-adenosyl-L-methionine = a menaquinol + S-adenosyl-L-homocysteine + H(+). The catalysed reaction is a 2-methoxy-6-(all-trans-polyprenyl)benzene-1,4-diol + S-adenosyl-L-methionine = a 5-methoxy-2-methyl-3-(all-trans-polyprenyl)benzene-1,4-diol + S-adenosyl-L-homocysteine + H(+). Its pathway is quinol/quinone metabolism; menaquinone biosynthesis; menaquinol from 1,4-dihydroxy-2-naphthoate: step 2/2. The protein operates within cofactor biosynthesis; ubiquinone biosynthesis. Methyltransferase required for the conversion of demethylmenaquinol (DMKH2) to menaquinol (MKH2) and the conversion of 2-polyprenyl-6-methoxy-1,4-benzoquinol (DDMQH2) to 2-polyprenyl-3-methyl-6-methoxy-1,4-benzoquinol (DMQH2). This is Ubiquinone/menaquinone biosynthesis C-methyltransferase UbiE from Ectopseudomonas mendocina (strain ymp) (Pseudomonas mendocina).